Consider the following 149-residue polypeptide: Phosphoribosyl-AMP cyclohydrolase (149 aa).

D92 is a binding site for Mg(2+). Residue C93 coordinates Zn(2+). Positions 94 and 96 each coordinate Mg(2+). Zn(2+)-binding residues include C111 and C118.

It belongs to the PRA-CH family. In terms of assembly, homodimer. It depends on Mg(2+) as a cofactor. Requires Zn(2+) as cofactor.

Its subcellular location is the cytoplasm. It carries out the reaction 1-(5-phospho-beta-D-ribosyl)-5'-AMP + H2O = 1-(5-phospho-beta-D-ribosyl)-5-[(5-phospho-beta-D-ribosylamino)methylideneamino]imidazole-4-carboxamide. The protein operates within amino-acid biosynthesis; L-histidine biosynthesis; L-histidine from 5-phospho-alpha-D-ribose 1-diphosphate: step 3/9. In terms of biological role, catalyzes the hydrolysis of the adenine ring of phosphoribosyl-AMP. The chain is Phosphoribosyl-AMP cyclohydrolase from Rhizobium rhizogenes (strain K84 / ATCC BAA-868) (Agrobacterium radiobacter).